Consider the following 152-residue polypeptide: Calcium-binding protein SPEC 1A (152 aa).

EF-hand domains are found at residues 10-45 (EEVT…TGKS), 46-81 (YTDK…QMVK), 84-119 (WKEE…SKPP), and 120-152 (MKRK…IKSC). Positions 23, 25, 27, 29, 34, 59, 61, 63, 65, 70, 97, 99, 101, 103, 108, 133, 135, 137, 139, and 144 each coordinate Ca(2+). The segment at 95–121 (DMDKDGNGSLSPQELREALSASKPPMK) is disordered.

Found in cell lineages giving rise to the aboral ectoderm, a squamous epithelium covering the surface of the late stage embryo and larva.

Functionally, calcium-binding protein involved in larval development and metamorphosis. Likely to function as calcium buffers mediating the transport of calcium from the sea water to the blastocoel where calcium is required for skeleton formation. In Strongylocentrotus purpuratus (Purple sea urchin), this protein is Calcium-binding protein SPEC 1A (SPEC1).